Here is a 407-residue protein sequence, read N- to C-terminus: Probable cysteine protease atg4 (407 aa).

The active-site Nucleophile is Cys-136. Catalysis depends on residues Asp-310 and His-312.

The protein belongs to the peptidase C54 family.

Its subcellular location is the cytoplasm. The protein localises to the nucleus. It localises to the preautophagosomal structure. The enzyme catalyses [protein]-C-terminal L-amino acid-glycyl-phosphatidylethanolamide + H2O = [protein]-C-terminal L-amino acid-glycine + a 1,2-diacyl-sn-glycero-3-phosphoethanolamine. Its function is as follows. Cysteine protease that is required for autophagy. Plays a key role in cytoplasm to vacuole transport (Cvt) and autophagy by mediating both proteolytic activation and delipidation of atg8. The protease activity is required for proteolytic activation of atg8 by the cleavage of the C-terminal amino acid of atg8 to reveal a C-terminal glycine. Azg8 ubiquitin-like activity requires the exposure of the glycine at the C-terminus for its conjugation to phosphatidylethanolamine (PE) and its insertion to membranes, which is necessary for autophagy. The atg8-PE conjugate mediates tethering between adjacent membranes and stimulates membrane hemifusion, leading to expansion of the autophagosomal membrane during autophagy. In addition to the protease activity, also catalyzes deconjugation of PE-conjugated forms of atg8 during macroautophagy since atg8 delipidation is required to release the protein from membranes, which facilitates multiple events during macroautophagy, and especially for efficient autophagosome biogenesis, the assembly of atg99-containing tubulovesicular clusters into phagophores/autophagosomes, and for the disassembly of PAS-associated ATG components. Atg8 delipidation by atg4 also recycles atg8-PE generated on inappropriate membranes to maintain a reservoir of unlipidated atg8 that is required for autophagosome formation at the PAS. In Aspergillus oryzae (strain ATCC 42149 / RIB 40) (Yellow koji mold), this protein is Probable cysteine protease atg4.